We begin with the raw amino-acid sequence, 455 residues long: Pup--protein ligase (455 aa).

Residue Glu10 coordinates Mg(2+). Arg55 lines the ATP pocket. Tyr57 contacts Mg(2+). The Proton acceptor role is filled by Asp59. Glu65 is a Mg(2+) binding site. Thr68 and Trp422 together coordinate ATP.

The protein belongs to the Pup ligase/Pup deamidase family. Pup-conjugating enzyme subfamily.

It carries out the reaction ATP + [prokaryotic ubiquitin-like protein]-L-glutamate + [protein]-L-lysine = ADP + phosphate + N(6)-([prokaryotic ubiquitin-like protein]-gamma-L-glutamyl)-[protein]-L-lysine.. It functions in the pathway protein degradation; proteasomal Pup-dependent pathway. It participates in protein modification; protein pupylation. Catalyzes the covalent attachment of the prokaryotic ubiquitin-like protein modifier Pup to the proteasomal substrate proteins, thereby targeting them for proteasomal degradation. This tagging system is termed pupylation. The ligation reaction involves the side-chain carboxylate of the C-terminal glutamate of Pup and the side-chain amino group of a substrate lysine. This Sanguibacter keddieii (strain ATCC 51767 / DSM 10542 / NCFB 3025 / ST-74) protein is Pup--protein ligase.